A 391-amino-acid polypeptide reads, in one-letter code: Elongation factor Tu 2 (391 aa).

A tr-type G domain is found at 10 to 201 (KPHVNIGTIG…EVDRYIPTPE (192 aa)). The interval 19–26 (GHVDHGKT) is G1. 19–26 (GHVDHGKT) provides a ligand contact to GTP. Threonine 26 lines the Mg(2+) pocket. The interval 55 to 59 (GITIS) is G2. The tract at residues 76-79 (DCPG) is G3. Residues 76–80 (DCPGH) and 131–134 (NKVD) contribute to the GTP site. Residues 131–134 (NKVD) are G4. A G5 region spans residues 169–171 (SAL).

The protein belongs to the TRAFAC class translation factor GTPase superfamily. Classic translation factor GTPase family. EF-Tu/EF-1A subfamily. Monomer.

It localises to the cytoplasm. It catalyses the reaction GTP + H2O = GDP + phosphate + H(+). Its function is as follows. GTP hydrolase that promotes the GTP-dependent binding of aminoacyl-tRNA to the A-site of ribosomes during protein biosynthesis. In Bartonella bacilliformis (strain ATCC 35685 / KC583 / Herrer 020/F12,63), this protein is Elongation factor Tu 2.